The primary structure comprises 274 residues: Acetyl-coenzyme A carboxylase carboxyl transferase subunit beta (274 aa).

In terms of domain architecture, CoA carboxyltransferase N-terminal spans 16–274; it reads LWTKCEECKN…LLNLLFYKNA (259 aa). Positions 20, 23, 39, and 42 each coordinate Zn(2+). The C4-type zinc finger occupies 20–42; that stretch reads CEECKNILLAQELETNFYVCPKC.

Belongs to the AccD/PCCB family. In terms of assembly, acetyl-CoA carboxylase is a heterohexamer composed of biotin carboxyl carrier protein (AccB), biotin carboxylase (AccC) and two subunits each of ACCase subunit alpha (AccA) and ACCase subunit beta (AccD). It depends on Zn(2+) as a cofactor.

Its subcellular location is the cytoplasm. The catalysed reaction is N(6)-carboxybiotinyl-L-lysyl-[protein] + acetyl-CoA = N(6)-biotinyl-L-lysyl-[protein] + malonyl-CoA. Its pathway is lipid metabolism; malonyl-CoA biosynthesis; malonyl-CoA from acetyl-CoA: step 1/1. Functionally, component of the acetyl coenzyme A carboxylase (ACC) complex. Biotin carboxylase (BC) catalyzes the carboxylation of biotin on its carrier protein (BCCP) and then the CO(2) group is transferred by the transcarboxylase to acetyl-CoA to form malonyl-CoA. The sequence is that of Acetyl-coenzyme A carboxylase carboxyl transferase subunit beta from Hydrogenobaculum sp. (strain Y04AAS1).